The sequence spans 533 residues: Metal transporter nramp1 homolog (533 aa).

Residues 1 to 33 (MTPRIESEESAPLVNKNNNNNNDNNNNNNVDEE) are disordered. Over 1-68 (MTPRIESEES…PNIDKPDSKW (68 aa)) the chain is Cytoplasmic. Low complexity predominate over residues 14–29 (VNKNNNNNNDNNNNNN). The helical transmembrane segment at 69–89 (INFKTLWAFTGPGFLMSIAYL) threads the bilayer. Topologically, residues 90-101 (DPGNLESDIQAG) are extracellular. Residues 102–122 (AMAGYQLLWVLFWSTVIGFWL) form a helical membrane-spanning segment. The Cytoplasmic segment spans residues 123 to 158 (QMLASRLGVVTGKHLAEHCREQYPKTPRLLLWLMTE). The helical transmembrane segment at 159-179 (LAIIGSDIQEVIGTAIALQIL) threads the bilayer. At 180 to 182 (SNG) the chain is on the extracellular side. A helical membrane pass occupies residues 183–203 (HIPLWAGVLFTAADTFTFLFL). The Cytoplasmic portion of the chain corresponds to 204–212 (EKYGIRKLE). A helical membrane pass occupies residues 213–233 (AFFCSLIAIMAISFGVEYIIS). The Extracellular portion of the chain corresponds to 234–256 (KPDQIEVVKGVFIPLCSQNNISQ). N253 is a glycosylation site (N-linked (GlcNAc...) asparagine). The helical transmembrane segment at 257–277 (AVGILGAVVMPHNIYLHSALV) threads the bilayer. At 278–302 (QSREIDRKSETQVKIANKYNRLESA) the chain is on the cytoplasmic side. Residues 303–323 (FALIISFIINLLLVSVFAKGF) form a helical membrane-spanning segment. Topologically, residues 324–348 (YGETTEIGLSSAADFLMDKYGKVAK) are extracellular. Residues 349-368 (YIWAIGLFSAGQCSTMTGTY) form a helical membrane-spanning segment. Over 369 to 387 (SGQFVMEGFLKLKIAPWKR) the chain is Cytoplasmic. Residues 388 to 408 (LLITRCTAIVPAMVVAILSTS) traverse the membrane as a helical segment. Residues 409 to 415 (HLDSLDQ) lie on the Extracellular side of the membrane. Residues 416-436 (WLNILQSIQLPFAVVPVLLFT) form a helical membrane-spanning segment. At 437–457 (SSEKIMGSKFKNHWLNNQFVR) the chain is on the cytoplasmic side. The helical transmembrane segment at 458–478 (FLSLLIIAINIYLIITFSMQI) threads the bilayer. Residues 479-481 (SES) lie on the Extracellular side of the membrane. The helical transmembrane segment at 482–502 (AWMISIVSISFFFYFIFIVYL) threads the bilayer. The Cytoplasmic segment spans residues 503-533 (SMGQENFNSMTKKIKNLFNNNSNQTYNNINY).

This sequence belongs to the NRAMP family.

The protein localises to the membrane. Depletes iron from the phagolysosome in an ATP-dependent process. May rather act as a symporter of protons and metal cations in an ATP-dependent process. Nramp1 overexpression protected cells from L.pneumophila infection. This chain is Metal transporter nramp1 homolog (nramp1), found in Dictyostelium discoideum (Social amoeba).